Reading from the N-terminus, the 29-residue chain is Cyclotide vibi-C (29 aa).

Residues 1-29 constitute a cross-link (cyclopeptide (Gly-Asn)); it reads GLPVCGETCAFGSCYTPGCSCSWPVCTRN. Intrachain disulfides connect cysteine 5–cysteine 19, cysteine 9–cysteine 21, and cysteine 14–cysteine 26.

This is a cyclic peptide.

Functionally, probably participates in a plant defense mechanism. The chain is Cyclotide vibi-C from Viola biflora (Yellow wood violet).